The following is a 121-amino-acid chain: Large ribosomal subunit protein uL14 (121 aa).

The protein belongs to the universal ribosomal protein uL14 family. In terms of assembly, part of the 50S ribosomal subunit. Forms a cluster with proteins L3 and L19. In the 70S ribosome, L14 and L19 interact and together make contacts with the 16S rRNA in bridges B5 and B8.

Functionally, binds to 23S rRNA. Forms part of two intersubunit bridges in the 70S ribosome. The chain is Large ribosomal subunit protein uL14 from Parabacteroides distasonis (strain ATCC 8503 / DSM 20701 / CIP 104284 / JCM 5825 / NCTC 11152).